We begin with the raw amino-acid sequence, 939 residues long: Valine--tRNA ligase (939 aa).

A 'HIGH' region motif is present at residues 47-57 (PNVTGILHMGH). The 'KMSKS' region motif lies at 563 to 567 (KLSKS). K566 provides a ligand contact to ATP. A coiled-coil region spans residues 874-939 (EHLAKERVRL…QSILDKLASL (66 aa)).

The protein belongs to the class-I aminoacyl-tRNA synthetase family. ValS type 1 subfamily. In terms of assembly, monomer.

The protein localises to the cytoplasm. The enzyme catalyses tRNA(Val) + L-valine + ATP = L-valyl-tRNA(Val) + AMP + diphosphate. In terms of biological role, catalyzes the attachment of valine to tRNA(Val). As ValRS can inadvertently accommodate and process structurally similar amino acids such as threonine, to avoid such errors, it has a 'posttransfer' editing activity that hydrolyzes mischarged Thr-tRNA(Val) in a tRNA-dependent manner. In Chlamydia trachomatis serovar L2 (strain ATCC VR-902B / DSM 19102 / 434/Bu), this protein is Valine--tRNA ligase.